The following is a 178-amino-acid chain: Large ribosomal subunit protein bL25 (178 aa).

Belongs to the bacterial ribosomal protein bL25 family. CTC subfamily. In terms of assembly, part of the 50S ribosomal subunit; part of the 5S rRNA/L5/L18/L25 subcomplex. Contacts the 5S rRNA. Binds to the 5S rRNA independently of L5 and L18.

This is one of the proteins that binds to the 5S RNA in the ribosome where it forms part of the central protuberance. The protein is Large ribosomal subunit protein bL25 of Sulfurimonas denitrificans (strain ATCC 33889 / DSM 1251) (Thiomicrospira denitrificans (strain ATCC 33889 / DSM 1251)).